Reading from the N-terminus, the 507-residue chain is GMP synthase [glutamine-hydrolyzing] (507 aa).

The Glutamine amidotransferase type-1 domain maps to 3–190 (KILVIDYGSQ…IQGICGLKGS (188 aa)). Cys77 functions as the Nucleophile in the catalytic mechanism. Active-site residues include His164 and Glu166. The region spanning 191–382 (WTLMDFVENK…LGLPREILYR (192 aa)) is the GMPS ATP-PPase domain. An ATP-binding site is contributed by 218–224 (SGGVDSS).

As to quaternary structure, homodimer.

The enzyme catalyses XMP + L-glutamine + ATP + H2O = GMP + L-glutamate + AMP + diphosphate + 2 H(+). Its pathway is purine metabolism; GMP biosynthesis; GMP from XMP (L-Gln route): step 1/1. Its function is as follows. Catalyzes the synthesis of GMP from XMP. The chain is GMP synthase [glutamine-hydrolyzing] from Petrotoga mobilis (strain DSM 10674 / SJ95).